A 713-amino-acid chain; its full sequence is Phosphoribosylformylglycinamidine synthase subunit PurL (713 aa).

Histidine 32 is an active-site residue. Tyrosine 35 serves as a coordination point for ATP. Glutamate 76 contacts Mg(2+). Substrate is bound by residues 77-80 (SHNH) and arginine 99. The Proton acceptor role is filled by histidine 78. Aspartate 100 is a Mg(2+) binding site. Residue glutamine 224 coordinates substrate. A Mg(2+)-binding site is contributed by aspartate 252. Position 296 to 298 (296 to 298 (ESQ)) interacts with substrate. Aspartate 471 and glycine 508 together coordinate ATP. Asparagine 509 is a binding site for Mg(2+). A substrate-binding site is contributed by serine 511.

The protein belongs to the FGAMS family. Monomer. Part of the FGAM synthase complex composed of 1 PurL, 1 PurQ and 2 PurS subunits.

Its subcellular location is the cytoplasm. It catalyses the reaction N(2)-formyl-N(1)-(5-phospho-beta-D-ribosyl)glycinamide + L-glutamine + ATP + H2O = 2-formamido-N(1)-(5-O-phospho-beta-D-ribosyl)acetamidine + L-glutamate + ADP + phosphate + H(+). Its pathway is purine metabolism; IMP biosynthesis via de novo pathway; 5-amino-1-(5-phospho-D-ribosyl)imidazole from N(2)-formyl-N(1)-(5-phospho-D-ribosyl)glycinamide: step 1/2. In terms of biological role, part of the phosphoribosylformylglycinamidine synthase complex involved in the purines biosynthetic pathway. Catalyzes the ATP-dependent conversion of formylglycinamide ribonucleotide (FGAR) and glutamine to yield formylglycinamidine ribonucleotide (FGAM) and glutamate. The FGAM synthase complex is composed of three subunits. PurQ produces an ammonia molecule by converting glutamine to glutamate. PurL transfers the ammonia molecule to FGAR to form FGAM in an ATP-dependent manner. PurS interacts with PurQ and PurL and is thought to assist in the transfer of the ammonia molecule from PurQ to PurL. This is Phosphoribosylformylglycinamidine synthase subunit PurL from Thermococcus kodakarensis (strain ATCC BAA-918 / JCM 12380 / KOD1) (Pyrococcus kodakaraensis (strain KOD1)).